We begin with the raw amino-acid sequence, 108 residues long: Glutaredoxin-1 (108 aa).

The 104-residue stretch at 3-106 (EEFVQQRLAN…DILSSIGVLR (104 aa)) folds into the Glutaredoxin domain. A disulfide bridge links cysteine 23 with cysteine 26.

Belongs to the glutaredoxin family.

It localises to the virion. Its function is as follows. Has thioltransferase and dehydroascorbate reductase activities. The chain is Glutaredoxin-1 (OPG075) from Cowpox virus (strain GRI-90 / Grishak) (CPV).